A 266-amino-acid chain; its full sequence is MLELRLVQGSLLKKVLESIKELVNDANFDCSSTGFSLQAMDSSHVALVALLLRSEGFEHYRCDRNLSMGMNLNNMAKMLKCAGNDDIITIKADDGSDTVTFMFESPTQDKISDFEMKLMDIDSEHLGIPEAEYHAIVRMPSAEFARICKDLSSIGDTVVIAVSKEGVKFSTKGDIGSANIVCRQNTTVDKPEEATVIEMNEPVALQFALRYMNSFTKATPLSSSVTISLSNELPVVVEYKIAEMGYVRFYLAPKIEEDEEETKPQA.

A DNA-binding region spans residues R61–K80.

The protein belongs to the PCNA family.

It is found in the nucleus. In terms of biological role, this protein is an auxiliary protein of DNA polymerase delta and is involved in the control of eukaryotic DNA replication by increasing the polymerase's processibility during elongation of the leading strand. The sequence is that of Proliferating cell nuclear antigen (PCNA) from Pisum sativum (Garden pea).